Reading from the N-terminus, the 103-residue chain is Large ribosomal subunit protein bL21 (103 aa).

Belongs to the bacterial ribosomal protein bL21 family. Part of the 50S ribosomal subunit. Contacts protein L20.

This protein binds to 23S rRNA in the presence of protein L20. This chain is Large ribosomal subunit protein bL21, found in Borreliella burgdorferi (strain ZS7) (Borrelia burgdorferi).